Consider the following 134-residue polypeptide: Arsenate reductase (134 aa).

Residues Cys-11, Cys-83, and Cys-90 each act as nucleophile in the active site. 2 disulfides stabilise this stretch: Cys-11/Cys-83 and Cys-83/Cys-90.

It belongs to the low molecular weight phosphotyrosine protein phosphatase family. Thioredoxin-coupled ArsC subfamily.

The protein resides in the cytoplasm. It carries out the reaction arsenate + [thioredoxin]-dithiol + H(+) = arsenite + [thioredoxin]-disulfide + H2O. Functionally, catalyzes the reduction of arsenate [As(V)] to arsenite [As(III)]. This chain is Arsenate reductase, found in Bacillus cereus (strain ATCC 14579 / DSM 31 / CCUG 7414 / JCM 2152 / NBRC 15305 / NCIMB 9373 / NCTC 2599 / NRRL B-3711).